A 427-amino-acid polypeptide reads, in one-letter code: Serine--tRNA ligase (427 aa).

236–238 (TAE) serves as a coordination point for L-serine. 267-269 (RRE) is a binding site for ATP. Glu290 serves as a coordination point for L-serine. 354-357 (EISS) contacts ATP. Ser390 lines the L-serine pocket.

This sequence belongs to the class-II aminoacyl-tRNA synthetase family. Type-1 seryl-tRNA synthetase subfamily. As to quaternary structure, homodimer. The tRNA molecule binds across the dimer.

It is found in the cytoplasm. The enzyme catalyses tRNA(Ser) + L-serine + ATP = L-seryl-tRNA(Ser) + AMP + diphosphate + H(+). It catalyses the reaction tRNA(Sec) + L-serine + ATP = L-seryl-tRNA(Sec) + AMP + diphosphate + H(+). It participates in aminoacyl-tRNA biosynthesis; selenocysteinyl-tRNA(Sec) biosynthesis; L-seryl-tRNA(Sec) from L-serine and tRNA(Sec): step 1/1. Functionally, catalyzes the attachment of serine to tRNA(Ser). Is also able to aminoacylate tRNA(Sec) with serine, to form the misacylated tRNA L-seryl-tRNA(Sec), which will be further converted into selenocysteinyl-tRNA(Sec). This Picosynechococcus sp. (strain ATCC 27264 / PCC 7002 / PR-6) (Agmenellum quadruplicatum) protein is Serine--tRNA ligase.